The sequence spans 122 residues: MARIAGVNIPTAKRVPIALTYIHGIGDFVAGQICDAVGIDRARRVNELSDAEVLSIREYIDANVTVEGDLRRETSMNIKRLMDLGCYRGLRHRRGLPVRGQRTHTNARTRKGPAKAIAGKKK.

The disordered stretch occupies residues 99 to 122; the sequence is RGQRTHTNARTRKGPAKAIAGKKK.

Belongs to the universal ribosomal protein uS13 family. As to quaternary structure, part of the 30S ribosomal subunit. Forms a loose heterodimer with protein S19. Forms two bridges to the 50S subunit in the 70S ribosome.

In terms of biological role, located at the top of the head of the 30S subunit, it contacts several helices of the 16S rRNA. In the 70S ribosome it contacts the 23S rRNA (bridge B1a) and protein L5 of the 50S subunit (bridge B1b), connecting the 2 subunits; these bridges are implicated in subunit movement. Contacts the tRNAs in the A and P-sites. The protein is Small ribosomal subunit protein uS13 of Cereibacter sphaeroides (strain ATCC 17029 / ATH 2.4.9) (Rhodobacter sphaeroides).